The primary structure comprises 67 residues: UPF0434 protein Bphy_0537 (67 aa).

The protein belongs to the UPF0434 family.

The chain is UPF0434 protein Bphy_0537 from Paraburkholderia phymatum (strain DSM 17167 / CIP 108236 / LMG 21445 / STM815) (Burkholderia phymatum).